The sequence spans 292 residues: MKDIATPNRTKDIVEKYGFSFKKSLGQNFLIDTNVLNRIVDHAEIGSESGAIEIGPGIGALTEQLAKRAKKVVAFEIDQRLLPILDETLAPYSNVTVINKDVLKADVHEVFSEQFEEGQDVMVVANLPYYITTPILFKLLEEKLPVRGFVVMMQKEVGDRLAAKPGTKEYGSLSIAIQYYTEVETVMTVPRTVFVPQPNVDSAIIRLLKRPKPVVEVTDETFFFEVVRASFAQRRKTLMNNLSNNLNGFPKDKELLDRILTEVGIDPKRRGETLSIEEFATLSNALILHKLS.

Positions 28, 30, 55, 76, 101, and 126 each coordinate S-adenosyl-L-methionine.

Belongs to the class I-like SAM-binding methyltransferase superfamily. rRNA adenine N(6)-methyltransferase family. RsmA subfamily.

The protein localises to the cytoplasm. The catalysed reaction is adenosine(1518)/adenosine(1519) in 16S rRNA + 4 S-adenosyl-L-methionine = N(6)-dimethyladenosine(1518)/N(6)-dimethyladenosine(1519) in 16S rRNA + 4 S-adenosyl-L-homocysteine + 4 H(+). Its function is as follows. Specifically dimethylates two adjacent adenosines (A1518 and A1519) in the loop of a conserved hairpin near the 3'-end of 16S rRNA in the 30S particle. May play a critical role in biogenesis of 30S subunits. The chain is Ribosomal RNA small subunit methyltransferase A from Bacillus mycoides (strain KBAB4) (Bacillus weihenstephanensis).